The primary structure comprises 63 residues: Large ribosomal subunit protein bL32 (63 aa).

The disordered stretch occupies residues 1–20 (MANPKAKMSKSRRDKRRAQF). Positions 7–18 (KMSKSRRDKRRA) are enriched in basic residues.

This sequence belongs to the bacterial ribosomal protein bL32 family.

In Chlorobaculum parvum (strain DSM 263 / NCIMB 8327) (Chlorobium vibrioforme subsp. thiosulfatophilum), this protein is Large ribosomal subunit protein bL32.